Consider the following 88-residue polypeptide: Small ribosomal subunit protein uS15 (88 aa).

The protein belongs to the universal ribosomal protein uS15 family. Part of the 30S ribosomal subunit. Forms a bridge to the 50S subunit in the 70S ribosome, contacting the 23S rRNA.

Functionally, one of the primary rRNA binding proteins, it binds directly to 16S rRNA where it helps nucleate assembly of the platform of the 30S subunit by binding and bridging several RNA helices of the 16S rRNA. Forms an intersubunit bridge (bridge B4) with the 23S rRNA of the 50S subunit in the ribosome. This is Small ribosomal subunit protein uS15 from Sorangium cellulosum (strain So ce56) (Polyangium cellulosum (strain So ce56)).